Reading from the N-terminus, the 956-residue chain is Translation initiation factor IF-2 (956 aa).

Positions 68–357 are disordered; sequence APEAAAPKAP…GVSVPRGDGN (290 aa). Composition is skewed to low complexity over residues 86-123, 141-156, 164-175, and 212-235; these read AKPAEAQASVKPVETQAPATPAAAKAAATPVAPAAPAV, PGNNPFATSQGMPRAG, PAAAPASGAGRP, and GPRPAAGSGGPRPAAGSGGPRPAA. 2 stretches are compositionally biased toward gly residues: residues 236-257 and 276-324; these read GSGGPRPGAGSGASRPGGGGGN and RGAG…GAGR. Residues 325–334 show a composition bias toward basic residues; sequence GKQRKSKRAK. A tr-type G domain is found at 449–620; that stretch reads ARPPVVTVMG…AVMLTADAAL (172 aa). The tract at residues 458-465 is G1; it reads GHVDHGKT. 458–465 contacts GTP; the sequence is GHVDHGKT. The segment at 483–487 is G2; the sequence is GITQH. Residues 508 to 511 are G3; it reads DTPG. Residues 508 to 512 and 562 to 565 contribute to the GTP site; these read DTPGH and NKID. Positions 562–565 are G4; the sequence is NKID. The interval 598–600 is G5; it reads SAR.

It belongs to the TRAFAC class translation factor GTPase superfamily. Classic translation factor GTPase family. IF-2 subfamily.

The protein resides in the cytoplasm. Functionally, one of the essential components for the initiation of protein synthesis. Protects formylmethionyl-tRNA from spontaneous hydrolysis and promotes its binding to the 30S ribosomal subunits. Also involved in the hydrolysis of GTP during the formation of the 70S ribosomal complex. The sequence is that of Translation initiation factor IF-2 from Renibacterium salmoninarum (strain ATCC 33209 / DSM 20767 / JCM 11484 / NBRC 15589 / NCIMB 2235).